We begin with the raw amino-acid sequence, 1098 residues long: Sister-chromatid cohesion protein 3 (1098 aa).

Residues 1 to 68 (MEDSPQGLKR…RSRTHPPQQN (68 aa)) form a disordered region. The stretch at 245 to 265 (RVDSLNKRLSVTHEQITTLED) forms a coiled coil. The region spanning 275–360 (FVHRYRDIDN…QRFSNRMIEM (86 aa)) is the SCD domain. Coiled coils occupy residues 632-653 (KLKDLEDELLDKITSAIREVKD), 888-908 (LESLKRAYHRYSSELSSGREE), and 1009-1032 (LETLEEKCLKNEDLQDDKEAANVR). The tract at residues 1027-1077 (EAANVRRRGRPRKRPETERKRLFDEQSGSDEDESISGGSDREDKLDEDAPL) is disordered. The span at 1040–1050 (RPETERKRLFD) shows a compositional bias: basic and acidic residues.

The protein belongs to the SCC3 family. Part of the cohesin complex. Interacts with DEK3. In terms of tissue distribution, expressed in roots, mature leaves, buds and seedlings.

The protein localises to the nucleus. The protein resides in the chromosome. Essential component of cohesin complex, a complex required for the cohesion of sister chromatids after DNA replication. The cohesin complex apparently forms a large proteinaceous ring within which sister chromatids can be trapped. At anaphase, the complex is cleaved and dissociates from chromatin, allowing sister chromatids to segregate. The cohesin complex may also play a role in spindle pole assembly during mitosis. Required for centromere cohesion maintenance at anaphase I and for the monopolar orientation of the kinetochores during both male and female meiosis. Also involved in mitosis. The sequence is that of Sister-chromatid cohesion protein 3 from Arabidopsis thaliana (Mouse-ear cress).